We begin with the raw amino-acid sequence, 214 residues long: ATP phosphoribosyltransferase (214 aa).

It belongs to the ATP phosphoribosyltransferase family. Short subfamily. Heteromultimer composed of HisG and HisZ subunits.

It is found in the cytoplasm. It carries out the reaction 1-(5-phospho-beta-D-ribosyl)-ATP + diphosphate = 5-phospho-alpha-D-ribose 1-diphosphate + ATP. It functions in the pathway amino-acid biosynthesis; L-histidine biosynthesis; L-histidine from 5-phospho-alpha-D-ribose 1-diphosphate: step 1/9. Catalyzes the condensation of ATP and 5-phosphoribose 1-diphosphate to form N'-(5'-phosphoribosyl)-ATP (PR-ATP). Has a crucial role in the pathway because the rate of histidine biosynthesis seems to be controlled primarily by regulation of HisG enzymatic activity. This is ATP phosphoribosyltransferase from Deinococcus deserti (strain DSM 17065 / CIP 109153 / LMG 22923 / VCD115).